The primary structure comprises 327 residues: GMP reductase (327 aa).

Cys-175 serves as the catalytic Thioimidate intermediate. Residue 204-227 participates in NADP(+) binding; sequence IIADGGIRTHGDIAKSVRFGASMV.

Belongs to the IMPDH/GMPR family. GuaC type 2 subfamily.

It carries out the reaction IMP + NH4(+) + NADP(+) = GMP + NADPH + 2 H(+). Its function is as follows. Catalyzes the irreversible NADPH-dependent deamination of GMP to IMP. It functions in the conversion of nucleobase, nucleoside and nucleotide derivatives of G to A nucleotides, and in maintaining the intracellular balance of A and G nucleotides. The chain is GMP reductase from Lysinibacillus sphaericus (strain C3-41).